Here is a 120-residue protein sequence, read N- to C-terminus: Proteinase inhibitor (120 aa).

Residues 1–19 (MKQLIIATLLSALSGGCMA) form the signal peptide. The cysteines at positions 43 and 65 are disulfide-linked.

This sequence belongs to the protease inhibitor I38 family. As to quaternary structure, monomer.

The protein localises to the periplasm. Functionally, inhibitor of the extracellular proteases A, B, and C of E.chrysanthemi and the S.marcescens 50 kDa extracellular protease. It forms a non-covalent bond with the proteases and may prevent autocatalytic cleavage of the proteases zymogen in the periplasm. The protein is Proteinase inhibitor (inh) of Dickeya chrysanthemi (Pectobacterium chrysanthemi).